The primary structure comprises 229 residues: Large ribosomal subunit protein uL4 (229 aa).

Residues 62-103 form a disordered region; it reads SRRQGTHQVKNRAAVSGSGKKPWKQKGTGRARHSSRRSPIWV. Residues 82–97 are compositionally biased toward basic residues; sequence KPWKQKGTGRARHSSR.

It belongs to the universal ribosomal protein uL4 family. In terms of assembly, part of the 50S ribosomal subunit.

Functionally, one of the primary rRNA binding proteins, this protein initially binds near the 5'-end of the 23S rRNA. It is important during the early stages of 50S assembly. It makes multiple contacts with different domains of the 23S rRNA in the assembled 50S subunit and ribosome. Its function is as follows. Forms part of the polypeptide exit tunnel. The polypeptide is Large ribosomal subunit protein uL4 (Mycoplasmopsis synoviae (strain 53) (Mycoplasma synoviae)).